We begin with the raw amino-acid sequence, 267 residues long: GTP cyclohydrolase MptA (267 aa).

It belongs to the GTP cyclohydrolase IV family. As to quaternary structure, homodimer. Fe(2+) is required as a cofactor.

The catalysed reaction is GTP + H2O = 7,8-dihydroneopterin 2',3'-cyclic phosphate + formate + diphosphate + H(+). Its pathway is cofactor biosynthesis; 5,6,7,8-tetrahydromethanopterin biosynthesis. In terms of biological role, converts GTP to 7,8-dihydro-D-neopterin 2',3'-cyclic phosphate, the first intermediate in the biosynthesis of coenzyme methanopterin. This Thermococcus kodakarensis (strain ATCC BAA-918 / JCM 12380 / KOD1) (Pyrococcus kodakaraensis (strain KOD1)) protein is GTP cyclohydrolase MptA.